A 287-amino-acid polypeptide reads, in one-letter code: Mitochondrial glycine transporter A (287 aa).

Solcar repeat units lie at residues His7–Arg97, Pro104–Leu188, and Tyr198–Gln282. A run of 6 helical transmembrane segments spans residues Phe13–Gln38, Gly72–Tyr98, Val110–Glu135, Gly163–Lys186, Ala202–Ile228, and Gly257–Val275.

This sequence belongs to the mitochondrial carrier (TC 2.A.29) family. SLC25A38 subfamily. At 24 hours post-fertilization, expressed predominantly in posterior blood island, posterior cardinal vein and circulating blood, as well as in somites, brain and retina. At 34 hours post-fertilization, becomes restricted to posterior blood island and circulating blood.

The protein localises to the mitochondrion inner membrane. It carries out the reaction glycine(in) = glycine(out). In terms of biological role, mitochondrial glycine transporter that imports glycine into the mitochondrial matrix. Plays an important role in providing glycine for the first enzymatic step in heme biosynthesis, the condensation of glycine with succinyl-CoA to produce 5-aminolevulinate (ALA) in the mitochondrial matrix. Required during erythropoiesis. May play a role as pro-apoptotic protein that induces caspase-dependent apoptosis. The sequence is that of Mitochondrial glycine transporter A (slc25a38a) from Danio rerio (Zebrafish).